Reading from the N-terminus, the 284-residue chain is Bifunctional protein FolD (284 aa).

Residues 166–168 (GAS), Ser191, and Ile232 each bind NADP(+).

This sequence belongs to the tetrahydrofolate dehydrogenase/cyclohydrolase family. As to quaternary structure, homodimer.

It catalyses the reaction (6R)-5,10-methylene-5,6,7,8-tetrahydrofolate + NADP(+) = (6R)-5,10-methenyltetrahydrofolate + NADPH. It carries out the reaction (6R)-5,10-methenyltetrahydrofolate + H2O = (6R)-10-formyltetrahydrofolate + H(+). It participates in one-carbon metabolism; tetrahydrofolate interconversion. Catalyzes the oxidation of 5,10-methylenetetrahydrofolate to 5,10-methenyltetrahydrofolate and then the hydrolysis of 5,10-methenyltetrahydrofolate to 10-formyltetrahydrofolate. The chain is Bifunctional protein FolD from Thiobacillus denitrificans (strain ATCC 25259 / T1).